Reading from the N-terminus, the 425-residue chain is Multifunctional CCA protein (425 aa).

Residues Gly-8 and Arg-11 each contribute to the ATP site. CTP contacts are provided by Gly-8 and Arg-11. Mg(2+) is bound by residues Asp-21 and Asp-23. 3 residues coordinate ATP: Arg-91, Arg-141, and Arg-144. 3 residues coordinate CTP: Arg-91, Arg-141, and Arg-144. Residues 230–331 (TGVHLMMVLD…VRLLERCDAI (102 aa)) form the HD domain.

It belongs to the tRNA nucleotidyltransferase/poly(A) polymerase family. Bacterial CCA-adding enzyme type 1 subfamily. In terms of assembly, monomer. Can also form homodimers and oligomers. Mg(2+) is required as a cofactor. Requires Ni(2+) as cofactor.

The enzyme catalyses a tRNA precursor + 2 CTP + ATP = a tRNA with a 3' CCA end + 3 diphosphate. It catalyses the reaction a tRNA with a 3' CCA end + 2 CTP + ATP = a tRNA with a 3' CCACCA end + 3 diphosphate. Functionally, catalyzes the addition and repair of the essential 3'-terminal CCA sequence in tRNAs without using a nucleic acid template. Adds these three nucleotides in the order of C, C, and A to the tRNA nucleotide-73, using CTP and ATP as substrates and producing inorganic pyrophosphate. tRNA 3'-terminal CCA addition is required both for tRNA processing and repair. Also involved in tRNA surveillance by mediating tandem CCA addition to generate a CCACCA at the 3' terminus of unstable tRNAs. While stable tRNAs receive only 3'-terminal CCA, unstable tRNAs are marked with CCACCA and rapidly degraded. The protein is Multifunctional CCA protein of Acidovorax sp. (strain JS42).